Consider the following 246-residue polypeptide: UDP-N-acetyl-D-mannosaminuronic acid transferase (246 aa).

The protein belongs to the glycosyltransferase 26 family.

The catalysed reaction is UDP-N-acetyl-alpha-D-mannosaminouronate + N-acetyl-alpha-D-glucosaminyl-di-trans,octa-cis-undecaprenyl diphosphate = beta-D-ManNAcA-(1-&gt;4)-alpha-D-GlcNAc-di-trans,octa-cis-undecaprenyl diphosphate + UDP + H(+). It participates in bacterial outer membrane biogenesis; enterobacterial common antigen biosynthesis. Functionally, catalyzes the synthesis of Und-PP-GlcNAc-ManNAcA (Lipid II), the second lipid-linked intermediate involved in enterobacterial common antigen (ECA) synthesis. The protein is UDP-N-acetyl-D-mannosaminuronic acid transferase of Klebsiella pneumoniae (strain 342).